The primary structure comprises 326 residues: N-acetyl-gamma-glutamyl-phosphate reductase (326 aa).

Residue C155 is part of the active site.

Belongs to the NAGSA dehydrogenase family. Type 1 subfamily.

The protein resides in the cytoplasm. It catalyses the reaction N-acetyl-L-glutamate 5-semialdehyde + phosphate + NADP(+) = N-acetyl-L-glutamyl 5-phosphate + NADPH + H(+). The protein operates within amino-acid biosynthesis; L-arginine biosynthesis; N(2)-acetyl-L-ornithine from L-glutamate: step 3/4. In terms of biological role, catalyzes the NADPH-dependent reduction of N-acetyl-5-glutamyl phosphate to yield N-acetyl-L-glutamate 5-semialdehyde. The sequence is that of N-acetyl-gamma-glutamyl-phosphate reductase from Shewanella baltica (strain OS155 / ATCC BAA-1091).